We begin with the raw amino-acid sequence, 398 residues long: Potassium channel subfamily K member 4 (398 aa).

Residues 1 to 3 lie on the Cytoplasmic side of the membrane; sequence MRS. Residues 4–24 traverse the membrane as a helical segment; the sequence is TTLLALLALVLLYLVSGALVF. Residues 25 to 88 lie on the Extracellular side of the membrane; sequence QALEQPHEQQ…WTNSSNHSSA (64 aa). N-linked (GlcNAc...) asparagine glycosylation is found at Asn81 and Asn84. An intramembrane region (helical) is located at residues 89–103; it reads WNLGSAFFFSGTIIT. K(+) is bound by residues Thr104, Ile105, Gly106, and Tyr107. Residues 104–109 form a selectivity filter 1 region; it reads TIGYGN. Residues 104–110 lie within the membrane without spanning it; sequence TIGYGNI. Topologically, residues 111 to 118 are extracellular; it reads VLHTDAGR. The chain crosses the membrane as a helical span at residues 119-151; sequence LFCIFYALVGIPLFGMLLAGVGDRLGSSLRRGI. Topologically, residues 152–173 are cytoplasmic; sequence GHIEAIFLKWHVPPGLVRSLSA. Residues 174–195 traverse the membrane as a helical segment; that stretch reads VLFLLIGCLLFVLTPTFVFSYM. The Extracellular segment spans residues 196–200; sequence ESWSK. The segment at residues 201-214 is an intramembrane region (helical); sequence LEAIYFVIVTLTTV. K(+)-binding residues include Thr213, Val214, Gly215, and Phe216. A selectivity filter 2 region spans residues 213 to 218; that stretch reads TVGFGD. Residues 215-220 lie within the membrane without spanning it; that stretch reads GFGDYV. Residues 221 to 234 lie on the Extracellular side of the membrane; that stretch reads PGDGTGQNSPAYQP. Residues 235–261 traverse the membrane as a helical segment; the sequence is LVWFWILFGLAYFASVLTTIGNWLRAV. The Cytoplasmic segment spans residues 262–398; that stretch reads SRRTRAEMGG…GRLRDKAVPV (137 aa). Positions 282 to 292 are enriched in polar residues; sequence TVTARVTQRTG. A disordered region spans residues 282-398; it reads TVTARVTQRT…GRLRDKAVPV (117 aa). Basic residues predominate over residues 370–389; that stretch reads PRGRRRPNPSKKPSRPRGPG.

This sequence belongs to the two pore domain potassium channel (TC 1.A.1.8) family. Homodimer; disulfide-linked. Forms heterodimers with other 2-pore domain K(+) channel subunits, such as KCNK2 and KCNK10. Post-translationally, N-glycosylated. As to expression, expressed in brain, spinal cord and eye. Not detected in heart, skeletal muscle, liver, lungs, kidney and testis.

It is found in the cell membrane. Its subcellular location is the cell projection. The protein resides in the axon. It carries out the reaction K(+)(in) = K(+)(out). It catalyses the reaction Rb(+)(in) = Rb(+)(out). The enzyme catalyses Cs(+)(in) = Cs(+)(out). Its activity is regulated as follows. Activated by arachidonic acid and other polyunsaturated fatty acids. Not affected by volatile general anesthetics such as chloroform, diethyl ether, halothane and isoflurane. Activated at intracellular and extracellular basic pHs. Functionally, k(+) channel that conducts voltage-dependent outward rectifying currents upon membrane depolarization. Voltage sensing is coupled to K(+) electrochemical gradient in an 'ion flux gating' mode where outward but not inward ion flow opens the gate. Converts to voltage-independent 'leak' conductance mode upon stimulation by various stimuli including mechanical membrane stretch, basic pH, temperature and lipids. Homo- and heterodimerizes to form functional channels with distinct regulatory and gating properties. At trigeminal A-beta afferent nerves, the heterodimer of KCNK2/TREK-1 and KCNK4/TRAAK is mostly coexpressed at nodes of Ranvier where it conducts voltage-independent mechanosensitive and thermosensitive currents, allowing rapid action potential repolarization, high speed and high frequence saltatory conduction on myelinated nerves to ensure prompt sensory responses. Permeable to other monovalent cations such as Rb(+) and Cs(+). In Mus musculus (Mouse), this protein is Potassium channel subfamily K member 4.